The sequence spans 225 residues: NAD(P)H-quinone oxidoreductase subunit K, chloroplastic (225 aa).

Cys-43, Cys-44, Cys-108, and Cys-139 together coordinate [4Fe-4S] cluster.

Belongs to the complex I 20 kDa subunit family. NDH is composed of at least 16 different subunits, 5 of which are encoded in the nucleus. [4Fe-4S] cluster serves as cofactor.

It localises to the plastid. Its subcellular location is the chloroplast thylakoid membrane. It carries out the reaction a plastoquinone + NADH + (n+1) H(+)(in) = a plastoquinol + NAD(+) + n H(+)(out). It catalyses the reaction a plastoquinone + NADPH + (n+1) H(+)(in) = a plastoquinol + NADP(+) + n H(+)(out). Its function is as follows. NDH shuttles electrons from NAD(P)H:plastoquinone, via FMN and iron-sulfur (Fe-S) centers, to quinones in the photosynthetic chain and possibly in a chloroplast respiratory chain. The immediate electron acceptor for the enzyme in this species is believed to be plastoquinone. Couples the redox reaction to proton translocation, and thus conserves the redox energy in a proton gradient. The sequence is that of NAD(P)H-quinone oxidoreductase subunit K, chloroplastic from Dioscorea elephantipes (Elephant's foot yam).